We begin with the raw amino-acid sequence, 424 residues long: CinA-like protein (424 aa).

This sequence belongs to the CinA family.

This Shewanella amazonensis (strain ATCC BAA-1098 / SB2B) protein is CinA-like protein.